A 193-amino-acid chain; its full sequence is Phosphatidylglycerophosphatase and protein-tyrosine phosphatase 1 (193 aa).

Residues Met1–Gly31 constitute a mitochondrion transit peptide. A Tyrosine-protein phosphatase domain is found at Trp37–Ala188. Lys85 carries the N6-succinyllysine modification. Catalysis depends on Cys132, which acts as the Phosphocysteine intermediate.

Belongs to the protein-tyrosine phosphatase family. Non-receptor class dual specificity subfamily. In terms of assembly, interacts with STYXL1; the interaction inhibits PTPMT1 catalytic activity. Predominantly expressed in testis. Expressed at lower level in heart, brain, spleen, lung, liver, skeletal muscle, kidney, bone marrow, eye, lymph node, smooth muscle, prostate, thymus, stomach and uterus.

The protein localises to the mitochondrion inner membrane. The catalysed reaction is a 1,2-diacyl-sn-glycero-3-phospho-(1'-sn-glycero-3'-phosphate) + H2O = a 1,2-diacyl-sn-glycero-3-phospho-(1'-sn-glycerol) + phosphate. It carries out the reaction O-phospho-L-tyrosyl-[protein] + H2O = L-tyrosyl-[protein] + phosphate. It catalyses the reaction O-phospho-L-seryl-[protein] + H2O = L-seryl-[protein] + phosphate. The enzyme catalyses O-phospho-L-threonyl-[protein] + H2O = L-threonyl-[protein] + phosphate. The catalysed reaction is 1,2-di-(9Z-octadecenoyl)-sn-glycero-3-phospho-(1'-sn-glycerol-3'-phosphate) + H2O = 1,2-di-(9Z-octadecenoyl)-sn-glycero-3-phospho-(1'-sn-glycerol) + phosphate. It carries out the reaction 1,2-dioctanoyl-sn-glycero-3-phospho-(1D-myo-inositol-5-phosphate) + H2O = 1,2-dioctanoyl-sn-glycero-3-phospho-(1D-myo-inositol) + phosphate. It catalyses the reaction a 1-acyl-2-hexanoyl-sn-glycero-3-phospho-(1D-myo-inositol-5-phosphate) + H2O = a 1-acyl-2-hexanoyl-sn-glycero-3-phospho-(1D-myo-inositol) + phosphate. The enzyme catalyses 1,2-dibutyryl-sn-glycero-3-phospho-(1D-myo-inositol-5-phosphate) + H2O = 1,2-dibutyryl-sn-glycero-3-phospho-(1D-myo-inositol) + phosphate. The protein operates within phospholipid metabolism; phosphatidylglycerol biosynthesis; phosphatidylglycerol from CDP-diacylglycerol: step 2/2. Its function is as follows. Lipid phosphatase which dephosphorylates phosphatidylglycerophosphate (PGP) to phosphatidylglycerol (PG). PGP is an essential intermediate in the biosynthetic pathway of cardiolipin, a mitochondrial-specific phospholipid regulating the membrane integrity and activities of the organelle. Has also been shown to display phosphatase activity toward phosphoprotein substrates, specifically mediates dephosphorylation of mitochondrial proteins, thereby playing an essential role in ATP production. Has probably a preference for proteins phosphorylated on Ser and/or Thr residues compared to proteins phosphorylated on Tyr residues. Probably involved in regulation of insulin secretion in pancreatic beta cells. May prevent intrinsic apoptosis, probably by regulating mitochondrial membrane integrity. The sequence is that of Phosphatidylglycerophosphatase and protein-tyrosine phosphatase 1 from Mus musculus (Mouse).